The sequence spans 66 residues: Beta-toxin Css6 (66 aa).

Positions 1–66 (KEGYLVNSYT…VWPLPNKTCN (66 aa)) constitute an LCN-type CS-alpha/beta domain. Disulfide bonds link Cys12/Cys65, Cys16/Cys41, Cys25/Cys46, and Cys29/Cys48. Asn66 bears the Asparagine amide mark.

This sequence belongs to the long (4 C-C) scorpion toxin superfamily. Sodium channel inhibitor family. Beta subfamily. As to expression, expressed by the venom gland.

Its subcellular location is the secreted. In terms of biological role, beta toxins bind voltage-independently at site-4 of sodium channels (Nav) and shift the voltage of activation toward more negative potentials thereby affecting sodium channel activation and promoting spontaneous and repetitive firing. The sequence is that of Beta-toxin Css6 from Centruroides suffusus (Durango bark scorpion).